Reading from the N-terminus, the 469-residue chain is TKASVGFKAGVKDYKLTYYTPDYETKDTDILAAFRMSPQPGVPPEEAGAAVAAESSTGTWTTVWTDGLTSLDRYKGRCYHIEPVAGEENQYIAYVAYPLDLFEEGSVTNMFTSIVGNVFGFKALRALRLEDLRIPVAYVKTFQGPPHGIQVERDKLNKYGRPLLGCTIKPKLGLSAKNYGRAVYECLRGGLDFTKDDENVNSQPFMRWRDRFVFCAEAIYKAQAETGEIKGHYLNATAGTCEEMMKRAVFARELGVPIVMHDYLTGGFTANTTLAHYCRDNGLLLHIHRAMHAVIDRQKNHGMHFRVLAKALRMSGGDHIHAGTVVGKLEGERDITLGFVDLLRDDFIEKDRSRGIFFTQDWVSLPGVLPVASGGIHVWHMPALTEIFGDDSVLQFGGGTLGHPWGNAPGAVANRVALEACVQARNEGRDLASEGNAIIREASKWSPELAAACEIWKEIKFEFPAMDTL.

Lys-8 bears the N6,N6,N6-trimethyllysine mark. 2 residues coordinate substrate: Asn-117 and Thr-167. The Proton acceptor role is filled by Lys-169. Position 171 (Lys-171) interacts with substrate. Residues Lys-195, Asp-197, and Glu-198 each contribute to the Mg(2+) site. Lys-195 carries the post-translational modification N6-carboxylysine. His-288 functions as the Proton acceptor in the catalytic mechanism. Residues Arg-289, His-321, and Ser-373 each contribute to the substrate site.

This sequence belongs to the RuBisCO large chain family. Type I subfamily. Heterohexadecamer of 8 large chains and 8 small chains; disulfide-linked. The disulfide link is formed within the large subunit homodimers. The cofactor is Mg(2+). In terms of processing, the disulfide bond which can form in the large chain dimeric partners within the hexadecamer appears to be associated with oxidative stress and protein turnover.

Its subcellular location is the plastid. The protein resides in the chloroplast. The catalysed reaction is 2 (2R)-3-phosphoglycerate + 2 H(+) = D-ribulose 1,5-bisphosphate + CO2 + H2O. It catalyses the reaction D-ribulose 1,5-bisphosphate + O2 = 2-phosphoglycolate + (2R)-3-phosphoglycerate + 2 H(+). In terms of biological role, ruBisCO catalyzes two reactions: the carboxylation of D-ribulose 1,5-bisphosphate, the primary event in carbon dioxide fixation, as well as the oxidative fragmentation of the pentose substrate in the photorespiration process. Both reactions occur simultaneously and in competition at the same active site. This Akania bidwillii (Turnipwood) protein is Ribulose bisphosphate carboxylase large chain.